The chain runs to 101 residues: MIEEIVKESEKGILIDIEVTTNAKKNEIGKINEWRKRIEIRIREQPIEGKANKAIVKFLKGIFKSEIFINSGTTSSQKTVLIPDKTKEDVVKILKKEIKSI.

The protein belongs to the UPF0235 family.

The protein is UPF0235 protein MmarC7_0309 of Methanococcus maripaludis (strain C7 / ATCC BAA-1331).